Reading from the N-terminus, the 625-residue chain is Probable potassium transport system protein Kup (625 aa).

12 consecutive transmembrane segments (helical) span residues 13–33 (TALA…LYAL), 53–73 (ILSI…VAIV), 103–123 (IYMI…GIIT), 141–161 (VFDP…FLVQ), 172–192 (FGPI…HSVI), 206–226 (AIQF…AVVL), 250–270 (WFFV…ALLL), 282–302 (LLVP…ATVI), 340–360 (IYVP…ILIF), 369–389 (AYGL…AVFI), 400–420 (VLLL…ATSL), and 422–442 (ILSG…ILMT).

It belongs to the HAK/KUP transporter (TC 2.A.72) family.

The protein resides in the cell inner membrane. It carries out the reaction K(+)(in) + H(+)(in) = K(+)(out) + H(+)(out). Its function is as follows. Transport of potassium into the cell. Likely operates as a K(+):H(+) symporter. In Acinetobacter baumannii (strain AYE), this protein is Probable potassium transport system protein Kup.